Consider the following 81-residue polypeptide: uncharacterized protein (81 aa).

The first 16 residues, 1 to 16, serve as a signal peptide directing secretion; it reads MNRLTFYGLCLSGAVG. Positions 55–81 are disordered; the sequence is TIDPHHNHHDDHHDSHGHGHGKIKGHH. Positions 57 to 71 are enriched in basic and acidic residues; it reads DPHHNHHDDHHDSHG. A compositionally biased stretch (basic residues) spans 72 to 81; that stretch reads HGHGKIKGHH.

The protein resides in the secreted. This is an uncharacterized protein from Dictyostelium discoideum (Social amoeba).